A 467-amino-acid polypeptide reads, in one-letter code: Glutamate--tRNA ligase 2 (467 aa).

Positions 18–28 (PSPTGYLHVGG) match the 'HIGH' region motif. Positions 238-242 (PLSKR) match the 'KMSKS' region motif. Position 241 (lysine 241) interacts with ATP.

It belongs to the class-I aminoacyl-tRNA synthetase family. Glutamate--tRNA ligase type 1 subfamily. As to quaternary structure, monomer.

The protein localises to the cytoplasm. The catalysed reaction is tRNA(Glu) + L-glutamate + ATP = L-glutamyl-tRNA(Glu) + AMP + diphosphate. Its function is as follows. Catalyzes the attachment of glutamate to tRNA(Glu) in a two-step reaction: glutamate is first activated by ATP to form Glu-AMP and then transferred to the acceptor end of tRNA(Glu). This Fervidobacterium nodosum (strain ATCC 35602 / DSM 5306 / Rt17-B1) protein is Glutamate--tRNA ligase 2.